Consider the following 251-residue polypeptide: Capsid protein (251 aa).

The Bipartite nuclear localization signal motif lies at 3-20 (KRDAPWRLMAGTSKVSRS). The Nuclear localization signal signature appears at 35–49 (KAAAWVNRPMYRKPR). The segment at 63–80 (CEGPCKVQSYEQRHDISH) is a zinc-finger region. The Nuclear export signal signature appears at 96–117 (ITHRVGKRFCVKSVYILGKIWM). The Bipartite nuclear localization signal motif lies at 195 to 242 (RRFWKVNNHVVYNHQEAGKYENHTENALLLYMACTHASNPVYATLKIR).

It belongs to the geminiviridae capsid protein family. In terms of assembly, homomultimer. Binds to single-stranded and double-stranded viral DNA. Interacts (via nuclear localization signals) with host importin alpha-1a.

Its subcellular location is the virion. The protein localises to the host nucleus. Functionally, encapsidates the viral DNA into characteristic twinned ('geminate') particles. Binds the genomic viral ssDNA and shuttles it into and out of the cell nucleus. The CP of bipartite geminiviruses is not required for cell-to-cell or systemic movement. The sequence is that of Capsid protein from Squash leaf curl virus (SLCV).